Reading from the N-terminus, the 198-residue chain is Ribonuclease HII (198 aa).

Residues 10 to 198 (QLVAGVDEVG…PVKRALGLAS (189 aa)) form the RNase H type-2 domain. A divalent metal cation contacts are provided by D16, E17, and D108.

This sequence belongs to the RNase HII family. Mn(2+) is required as a cofactor. The cofactor is Mg(2+).

Its subcellular location is the cytoplasm. The enzyme catalyses Endonucleolytic cleavage to 5'-phosphomonoester.. Functionally, endonuclease that specifically degrades the RNA of RNA-DNA hybrids. The polypeptide is Ribonuclease HII (Shigella boydii serotype 4 (strain Sb227)).